The following is a 118-amino-acid chain: DNA-binding protein inhibitor ID-3-B (118 aa).

The region spanning 32–84 (SLKGAGIDETMGLLYDMNGCYSKLKELVPGIPQGSKLSQVEILQHVIDYIFDL) is the bHLH domain.

In terms of assembly, homodimer. Heterodimer with other HLH proteins. Interacts (via HLH domain) with the bHLH protein hes4/hairy2 (via Orange domain). Interacts with stat3.

Its subcellular location is the nucleus. In terms of biological role, transcriptional regulator (lacking a basic DNA binding domain) which negatively regulates the basic helix-loop-helix (bHLH) transcription factors by forming heterodimers and inhibiting their DNA binding and transcriptional activity. Influences cell fate decisions in the embryo by sequestering and blocking the activity of the bHLH transcription factors that control these decisions. Inhibits the binding of myogenic bHLH-containing complexes to E-box DNA, thereby preventing activation of muscle-specific target genes. Also inhibits the activity of neurogenic factor neurod1/neuroD. Plays a role in cell cycle progression and survival of neural crest progenitors; binding to either hes4-B/hairy2b or stat3 blocks the formation of transcription factor complexes and the repressor function of hes4-B/hairy2B, to allow neural crest progenitors to differentiate. May play a role in the regulation of the circadian rhythm. This is DNA-binding protein inhibitor ID-3-B (id3-b) from Xenopus laevis (African clawed frog).